Reading from the N-terminus, the 410-residue chain is MQTTTALRLYGKRDLRLETFTLPAMQDDEILARVVTDSLCLSSWKEANQGADHKKVPDDVATRPIIIGHEFCGEILAVGKKWQHKFQPGQRYVIQANLQLPDRPDCPGYSFPWIGGEATHVVIPNEVMAQDCLLTWEGDTWFEGSLVEPLSCVIGAFNANYHLQEGSYNHVMGIRPQGHTLILGGTGPMGLLAIDYALHGPINPSLLVVTDTNKPKLSYARRHYPSEPQTLIHYLDGHEASRDTLLALSGGHGFDDIFVFVPNEQLITLASSLLAPDGCLNFFAGPQDKQFSAPINFYDVHYAFTHYVGTSGGNTDDMRAAVALMQAKKVQTAKVVTHILGLNAAGETTLDLPAVGGGKKLVYTGKAFPLTPLGEIADPELAAIVARHHGIWSQEAEAYLLAHAEDITHD.

Residues C40, H69, and E70 each coordinate Zn(2+). Residues R221 and 309–310 contribute to the NAD(+) site; that span reads GT.

Belongs to the zinc-containing alcohol dehydrogenase family. Zn(2+) serves as cofactor.

Functionally, reduces L-sorbose 1-phosphate to D-glucitol 6-phosphate. In Klebsiella pneumoniae, this protein is L-sorbose 1-phosphate reductase (sorE).